We begin with the raw amino-acid sequence, 382 residues long: MLDGLKMEENFQSAIDTSASFSSLLGRAVSPKSVCEGCQRVILDRFLLRLNDSFWHEQCVQCASCKEPLETTCFYRDKKLYCKYDYEKLFAVKCGGCFEAIAPNEFVMRAQKSVYHLSCFCCCVCERQLQKGDEFVLKEGQLLCKGDYEKERELLSLVSPAASDSGKSDDEESLCKSAHGAGKGTAEEGKDHKRPKRPRTILTTQQRRAFKASFEVSSKPCRKVRETLAAETGLSVRVVQVWFQNQRAKMKKLARRQQQQQQDQQNTQRLSSAQTNGGGSAGMEGIMNPYTALPTPQQLLAIEQSVYSSDPFRQGLTPPQMPGDHMHPYGAEPLFHDLDSDDTSLSNLGDCFLATSEAGPLQSRVGNPIDHLYSMQNSYFTS.

LIM zinc-binding domains are found at residues S33 to V92 and V92 to L154. 2 disordered regions span residues A161–R208 and K252–G285. Positions P195–A254 form a DNA-binding region, homeobox. Residues R256–R269 show a composition bias toward low complexity.

Isoform 1 is expressed in many tissues. Not found in heart, liver, spleen and testis. Relatively highly expressed in fetal brain. Isoform LMX1A-4AB is expressed in testis.

It is found in the nucleus. Functionally, acts as a transcriptional activator by binding to an A/T-rich sequence, the FLAT element, in the insulin gene promoter. Required for development of the roof plate and, in turn, for specification of dorsal cell fates in the CNS and developing vertebrae. This is LIM homeobox transcription factor 1-alpha (LMX1A) from Homo sapiens (Human).